The sequence spans 350 residues: Phospho-N-acetylmuramoyl-pentapeptide-transferase (350 aa).

A run of 9 helical transmembrane segments spans residues 28-48, 70-90, 100-120, 136-156, 164-184, 195-215, 221-241, 249-269, and 328-348; these read LPLL…IPLL, GTPT…GSLI, LLSL…DDWS, LLLQ…QGWI, FGLE…VVLA, LDGL…LQLM, GDPA…GFLV, AFMG…VALL, and QSVV…GLVL.

Belongs to the glycosyltransferase 4 family. MraY subfamily. Requires Mg(2+) as cofactor.

It localises to the cell inner membrane. The enzyme catalyses UDP-N-acetyl-alpha-D-muramoyl-L-alanyl-gamma-D-glutamyl-meso-2,6-diaminopimeloyl-D-alanyl-D-alanine + di-trans,octa-cis-undecaprenyl phosphate = di-trans,octa-cis-undecaprenyl diphospho-N-acetyl-alpha-D-muramoyl-L-alanyl-D-glutamyl-meso-2,6-diaminopimeloyl-D-alanyl-D-alanine + UMP. It participates in cell wall biogenesis; peptidoglycan biosynthesis. In terms of biological role, catalyzes the initial step of the lipid cycle reactions in the biosynthesis of the cell wall peptidoglycan: transfers peptidoglycan precursor phospho-MurNAc-pentapeptide from UDP-MurNAc-pentapeptide onto the lipid carrier undecaprenyl phosphate, yielding undecaprenyl-pyrophosphoryl-MurNAc-pentapeptide, known as lipid I. The chain is Phospho-N-acetylmuramoyl-pentapeptide-transferase from Synechococcus sp. (strain CC9605).